A 485-amino-acid chain; its full sequence is NADH-quinone oxidoreductase subunit N (485 aa).

A run of 14 helical transmembrane segments spans residues Leu-8–Ile-28, Phe-35–Val-55, Gly-71–Ala-91, Phe-105–Leu-125, Ser-127–Phe-147, Tyr-159–Ala-179, Leu-203–Phe-223, Pro-235–Met-255, Val-271–Gln-291, Leu-297–Gln-317, Val-326–Leu-346, Ala-373–Ile-393, Trp-408–Val-430, and Ile-455–Ile-475.

It belongs to the complex I subunit 2 family. NDH-1 is composed of 13 different subunits. Subunits NuoA, H, J, K, L, M, N constitute the membrane sector of the complex.

It localises to the cell inner membrane. It catalyses the reaction a quinone + NADH + 5 H(+)(in) = a quinol + NAD(+) + 4 H(+)(out). NDH-1 shuttles electrons from NADH, via FMN and iron-sulfur (Fe-S) centers, to quinones in the respiratory chain. The immediate electron acceptor for the enzyme in this species is believed to be ubiquinone. Couples the redox reaction to proton translocation (for every two electrons transferred, four hydrogen ions are translocated across the cytoplasmic membrane), and thus conserves the redox energy in a proton gradient. In Shigella sonnei (strain Ss046), this protein is NADH-quinone oxidoreductase subunit N.